Consider the following 908-residue polypeptide: NADH-quinone oxidoreductase subunit G (908 aa).

The 2Fe-2S ferredoxin-type domain occupies 2 to 83 (ATIHVDGKEY…GTFISIDDEE (82 aa)). Residues C34, C45, C48, and C67 each coordinate [2Fe-2S] cluster. A 4Fe-4S His(Cys)3-ligated-type domain is found at 83 to 122 (EAKQFRESVVEWLMTNHPHDCPVCEEGGNCHLQDMTVMTG). Positions 99, 103, 106, 112, 151, 154, 157, 201, 228, 231, 235, and 263 each coordinate [4Fe-4S] cluster. Residues 221 to 277 (MQFAPSICQQCSIGCNISPGERYGELRRIENRYNGTVNHYFLCDRGRFGYGYVNLKD) enclose the 4Fe-4S Mo/W bis-MGD-type domain.

It belongs to the complex I 75 kDa subunit family. Composed of 13 different subunits. Subunits NuoCD, E, F, and G constitute the peripheral sector of the complex. It depends on [2Fe-2S] cluster as a cofactor. Requires [4Fe-4S] cluster as cofactor.

It is found in the cytoplasm. The protein resides in the cell inner membrane. It carries out the reaction a quinone + NADH + 5 H(+)(in) = a quinol + NAD(+) + 4 H(+)(out). Its function is as follows. NDH-1 shuttles electrons from NADH, via FMN and iron-sulfur (Fe-S) centers, to quinones in the respiratory chain. The immediate electron acceptor for the enzyme in this species is believed to be ubiquinone. Couples the redox reaction to proton translocation (for every two electrons transferred, four hydrogen ions are translocated across the cytoplasmic membrane), and thus conserves the redox energy in a proton gradient. The protein is NADH-quinone oxidoreductase subunit G (nuoG) of Escherichia coli (strain K12).